Consider the following 155-residue polypeptide: Transcriptional regulator MraZ (155 aa).

SpoVT-AbrB domains follow at residues 7-63 and 92-135; these read REQH…EPSV and LDQT…EPLR.

The protein belongs to the MraZ family. As to quaternary structure, forms oligomers.

The protein resides in the cytoplasm. The protein localises to the nucleoid. This is Transcriptional regulator MraZ from Chlorobaculum tepidum (strain ATCC 49652 / DSM 12025 / NBRC 103806 / TLS) (Chlorobium tepidum).